The following is a 324-amino-acid chain: Integrin-binding sialoprotein (324 aa).

The signal sequence occupies residues 1 to 16 (MKTALILLSILGMACA). A phosphoserine mark is found at S31, S67, S75, S76, and S95. 2 disordered regions span residues 60 to 228 (VQGG…GREL) and 243 to 263 (QQTTPPPEAYGTTSPPIRKSS). Over residues 66 to 105 (SSEENGDGDSSEEEGEEEETSNEEENNEDSEGNEDQEAEA) the composition is skewed to acidic residues. Over residues 106–130 (ENSTLSTLSGVTASYGAETTPQAQT) the composition is skewed to polar residues. The N-linked (GlcNAc...) asparagine glycan is linked to N107. Residues 141-154 (KAGDAESRAPKVKE) are compositionally biased toward basic and acidic residues. S155 is subject to Phosphoserine. A compositionally biased stretch (acidic residues) spans 155 to 179 (SDEEEEEEEEEEENENEEAEVDENE). 3 N-linked (GlcNAc...) asparagine glycosylation sites follow: N183, N188, and N196. Residues 203-213 (NGEEAEAEEAS) show a composition bias toward acidic residues. The span at 253–263 (GTTSPPIRKSS) shows a compositional bias: polar residues. Residues 293–295 (RGD) carry the Integrin-binding motif motif. Sulfotyrosine occurs at positions 320 and 321.

Monomer. Interacts with integrins; the interaction promotes cell adhesion.

Its subcellular location is the secreted. Functionally, binds tightly to hydroxyapatite. Appears to form an integral part of the mineralized matrix. Probably important to cell-matrix interaction. Promotes adhesion and migration of various cells via the alpha-V/beta-3 integrin receptor (ITGAV:ITGB3). This chain is Integrin-binding sialoprotein (Ibsp), found in Mus musculus (Mouse).